The sequence spans 157 residues: Crossover junction endodeoxyribonuclease RuvC (157 aa).

Active-site residues include aspartate 7, glutamate 67, and aspartate 139. Mg(2+) contacts are provided by aspartate 7, glutamate 67, and aspartate 139.

Belongs to the RuvC family. In terms of assembly, homodimer which binds Holliday junction (HJ) DNA. The HJ becomes 2-fold symmetrical on binding to RuvC with unstacked arms; it has a different conformation from HJ DNA in complex with RuvA. In the full resolvosome a probable DNA-RuvA(4)-RuvB(12)-RuvC(2) complex forms which resolves the HJ. Requires Mg(2+) as cofactor.

Its subcellular location is the cytoplasm. It catalyses the reaction Endonucleolytic cleavage at a junction such as a reciprocal single-stranded crossover between two homologous DNA duplexes (Holliday junction).. The RuvA-RuvB-RuvC complex processes Holliday junction (HJ) DNA during genetic recombination and DNA repair. Endonuclease that resolves HJ intermediates. Cleaves cruciform DNA by making single-stranded nicks across the HJ at symmetrical positions within the homologous arms, yielding a 5'-phosphate and a 3'-hydroxyl group; requires a central core of homology in the junction. The consensus cleavage sequence is 5'-(A/T)TT(C/G)-3'. Cleavage occurs on the 3'-side of the TT dinucleotide at the point of strand exchange. HJ branch migration catalyzed by RuvA-RuvB allows RuvC to scan DNA until it finds its consensus sequence, where it cleaves and resolves the cruciform DNA. In Prochlorococcus marinus (strain MIT 9312), this protein is Crossover junction endodeoxyribonuclease RuvC.